We begin with the raw amino-acid sequence, 2221 residues long: RNA-directed RNA polymerase L (2221 aa).

An endonuclease region spans residues 29–292 (KTVLLSQVNF…SERETLIEAE (264 aa)). Residues Glu54, Asp91, and Glu104 each contribute to the Mn(2+) site. Lys117 is an active-site residue. Residues 1171 to 1369 (LDMKSVVRLS…YLSSKLNKFI (199 aa)) enclose the RdRp catalytic domain. Asp1327 lines the Mg(2+) pocket.

It belongs to the Bunyavirales RNA polymerase family. As to quaternary structure, homomultimer; the oligomeric structure is essential for the polymerase activity. Interacts with nucleoprotein N. Interacts with protein Z; this interaction inhibits viral transcription and replication, Z partially blocks the product exit tunnel for the releasing nascent RNA product. It depends on Mn(2+) as a cofactor. Requires Mg(2+) as cofactor.

Its subcellular location is the virion. It is found in the host cytoplasm. It catalyses the reaction RNA(n) + a ribonucleoside 5'-triphosphate = RNA(n+1) + diphosphate. Its function is as follows. RNA-dependent RNA polymerase, which is responsible for the replication and transcription of the viral RNA genome using antigenomic RNA as an intermediate. During transcription, synthesizes subgenomic RNAs and assures their capping by a cap-snatching mechanism, which involves the endonuclease activity cleaving the host capped pre-mRNAs. These short capped RNAs are then used as primers for viral transcription. The 3'-end of subgenomic mRNAs molecules are heterogeneous and not polyadenylated. The replicase function is to direct synthesis of antigenomic and genomic RNA which are encapsidated and non capped. As a consequence of the use of the same enzyme for both transcription and replication, these mechanisms need to be well coordinated. These processes may be regulated by proteins N and Z in a dose-dependent manner. Z protein inhibits the viral polymerase L und thus the viral transcription and RNA synthesis. The protein is RNA-directed RNA polymerase L of Sigmodon hispidus (Hispid cotton rat).